Reading from the N-terminus, the 423-residue chain is Putative serpin-Z12 (423 aa).

The tract at residues methionine 1 to valine 25 is disordered. The RCL stretch occupies residues glycine 370–valine 394.

The protein belongs to the serpin family.

Functionally, probable serine protease inhibitor. The protein is Putative serpin-Z12 of Oryza sativa subsp. japonica (Rice).